The sequence spans 441 residues: MIPVTSKSSSGFALPDLSTDRAHRAVPAEGAARAALEGRRTGIAALLPFVGPAVIASIGYMDPGNFATNIQAGAAYGYRLLWVVLAANAIAMLFQAMSAKLGIVTGRNLAELCREHFPAPIVWGMWIASEIAAMATDLAEFLGGALAFALLCHLPLFAGMIATALATCAILALEKRGFRPLEAAIAALVGVIGACYLGELMIAPQDWHAAAFHLVVPQIPDRAALTIAVGIIGATIMPHTLYLHSGLTQDRIAPRDDTERRRLMRFSNREVVVALGLAGFVNLAMVMMAASAFHASAPGMADIGDAYHTLIPVLGPAAGVLFLVALLTSGVSSSVVGTMAGQVVMQGFMRRRLSVWMRRAVTIAPAFAVVACGCDVTRAMVASQVVLSFVLPMPMIALLILSARNDVMGRYAMRMPLRIVAGTATVVIVGLNAYLVWAAFN.

11 helical membrane passes run 41–61 (TGIAALLPFVGPAVIASIGYM), 74–94 (AAYGYRLLWVVLAANAIAMLF), 116–136 (HFPAPIVWGMWIASEIAAMAT), 141–161 (FLGGALAFALLCHLPLFAGMI), 183–203 (AAIAALVGVIGACYLGELMIA), 223–243 (AALTIAVGIIGATIMPHTLYL), 271–291 (VVVALGLAGFVNLAMVMMAAS), 311–331 (IPVLGPAAGVLFLVALLTSGV), 360–380 (AVTIAPAFAVVACGCDVTRAM), 381–401 (VASQVVLSFVLPMPMIALLIL), and 419–439 (IVAGTATVVIVGLNAYLVWAA).

It belongs to the NRAMP family.

The protein resides in the cell inner membrane. Its function is as follows. H(+)-stimulated, divalent metal cation uptake system. This chain is Divalent metal cation transporter MntH, found in Burkholderia ambifaria (strain ATCC BAA-244 / DSM 16087 / CCUG 44356 / LMG 19182 / AMMD) (Burkholderia cepacia (strain AMMD)).